A 450-amino-acid chain; its full sequence is UDP-N-acetylmuramoylalanine--D-glutamate ligase (450 aa).

Position 119–125 (119–125) interacts with ATP; that stretch reads GSNGKTT.

Belongs to the MurCDEF family.

Its subcellular location is the cytoplasm. It carries out the reaction UDP-N-acetyl-alpha-D-muramoyl-L-alanine + D-glutamate + ATP = UDP-N-acetyl-alpha-D-muramoyl-L-alanyl-D-glutamate + ADP + phosphate + H(+). Its pathway is cell wall biogenesis; peptidoglycan biosynthesis. Its function is as follows. Cell wall formation. Catalyzes the addition of glutamate to the nucleotide precursor UDP-N-acetylmuramoyl-L-alanine (UMA). The protein is UDP-N-acetylmuramoylalanine--D-glutamate ligase of Streptococcus pneumoniae (strain P1031).